The primary structure comprises 67 residues: VRDGYIMIKDTNCKFSCNIFKKWEYCSPLCQSKGAETGYCYNFGCWCLDLPDDVPVYGDRGVICRTR.

Residues 2–65 (RDGYIMIKDT…VYGDRGVICR (64 aa)) enclose the LCN-type CS-alpha/beta domain. Intrachain disulfides connect C13-C64, C17-C40, C26-C45, and C30-C47. Position 67 (R67) is a propeptide, removed by a carboxypeptidase.

This sequence belongs to the long (4 C-C) scorpion toxin superfamily. Sodium channel inhibitor family. Alpha subfamily. In terms of tissue distribution, expressed by the venom gland.

The protein resides in the secreted. In terms of biological role, alpha toxins bind voltage-independently at site-3 of sodium channels (Nav) and inhibit the inactivation of the activated channels, thereby blocking neuronal transmission. This Androctonus crassicauda (Arabian fat-tailed scorpion) protein is Putative sodium channel alpha-toxin Acra5.